A 368-amino-acid polypeptide reads, in one-letter code: tRNA-specific 2-thiouridylase MnmA (368 aa).

Residues Gly11–Ser18 and Met37 contribute to the ATP site. The segment at Asn97–Asp99 is interaction with target base in tRNA. Cys102 acts as the Nucleophile in catalysis. Cys102 and Cys199 are disulfide-bonded. Gly127 provides a ligand contact to ATP. Positions Lys149–Gln151 are interaction with tRNA. The active-site Cysteine persulfide intermediate is the Cys199. Positions Arg311 to Tyr312 are interaction with tRNA.

This sequence belongs to the MnmA/TRMU family. Interacts with TusE.

It localises to the cytoplasm. It catalyses the reaction S-sulfanyl-L-cysteinyl-[protein] + uridine(34) in tRNA + AH2 + ATP = 2-thiouridine(34) in tRNA + L-cysteinyl-[protein] + A + AMP + diphosphate + H(+). Catalyzes the 2-thiolation of uridine at the wobble position (U34) of tRNA(Lys), tRNA(Glu) and tRNA(Gln), leading to the formation of s(2)U34, the first step of tRNA-mnm(5)s(2)U34 synthesis. Sulfur is provided by IscS, via a sulfur-relay system. Binds ATP and its substrate tRNAs. This is tRNA-specific 2-thiouridylase MnmA from Shigella flexneri serotype 5b (strain 8401).